The chain runs to 292 residues: Trimeric intracellular cation channel type B (292 aa).

Topologically, residues 1-16 (MEYPWDDLTLAFSRTS) are lumenal. Residues 17–34 (MFPFFDIAHYLVSVMALK) traverse the membrane as a helical segment. Over 35-47 (QRPGAVAAAWNNP) the chain is Cytoplasmic. The chain crosses the membrane as a helical span at residues 48–69 (LASWLSAMLHCFGGGILSCMLL). Residues 70 to 82 (AESPLKFLTNHTN) lie on the Lumenal side of the membrane. A helical transmembrane segment spans residues 83-100 (ILLASSIWYIVFFCPRDL). The Cytoplasmic segment spans residues 101 to 103 (VSQ). The chain crosses the membrane as a helical span at residues 104-122 (GYSYQPIQFLAAGMKEVTR). A 1,2-diacyl-sn-glycero-3-phospho-(1D-myo-inositol-4,5-bisphosphate) is bound by residues Lys-118 and Arg-122. At 123 to 140 (TWKIVGGVSDANSYYRNA) the chain is on the lumenal side. A helical transmembrane segment spans residues 141–158 (WIVMIVVGWARGAGGAVV). The Cytoplasmic portion of the chain corresponds to 159 to 178 (TACEQLLKGDWKPEGDEWLK). Residues 179–195 (MSFPCKITLLGSIMFTF) traverse the membrane as a helical segment. At 196-206 (QHTRHLAISKH) the chain is on the lumenal side. A helical transmembrane segment spans residues 207-225 (DLMFLYTIFLVTIKVTMMM). Over 226–292 (TKDTAVTLTP…GAKRHAKKED (67 aa)) the chain is Cytoplasmic. Positions 248–292 (RQQQQFSSSEKKTEVKPSSNGSASSASKRGAEPSGGAKRHAKKED) are disordered. Positions 265-274 (SSNGSASSAS) are enriched in low complexity.

It belongs to the TMEM38 family. As to quaternary structure, homotrimer; conformation seems to be controled by binding to diacylglycerol (DAG). In terms of tissue distribution, widely expressed.

Its subcellular location is the endoplasmic reticulum membrane. It catalyses the reaction K(+)(in) = K(+)(out). Its activity is regulated as follows. Channel activity is activated by increased cytosolic Ca(2+) levels and blocked by luminal high Ca(2+) levels. Its function is as follows. Intracellular monovalent cation channel required for maintenance of rapid intracellular calcium release. Acts as a potassium counter-ion channel that functions in synchronization with calcium release from intracellular stores. Activated by increased cytosolic Ca(2+) levels. In Mus musculus (Mouse), this protein is Trimeric intracellular cation channel type B (Tmem38b).